A 477-amino-acid chain; its full sequence is ETS translocation variant 1 (477 aa).

Position 94 is a phosphoserine (serine 94). Residues 128-179 (PQVGMRPSNPPTPSSTPVSPLHHASPNSTHTPKPDRAFPAHLPPSQSIPDSS) form a disordered region. A phosphoserine; by RPS6KA1 and RPS6KA5 mark is found at serine 191 and serine 216. Lysine 317 is covalently cross-linked (Glycyl lysine isopeptide (Lys-Gly) (interchain with G-Cter in SUMO2)). A DNA-binding region (ETS) is located at residues 335–415 (LQLWQFLVAL…AGERYVYKFV (81 aa)).

Belongs to the ETS family. Sumoylated. Post-translationally, phosphorylated at Ser-191 and Ser-216 by RPS6KA1 and RPS6KA5; phosphorylation activates transcriptional activity. As to expression, very highly expressed in brain, highly expressed in testis, lung and heart, moderately in spleen, small intestine, pancreas and colon, weakly in liver, prostate and thymus, very weakly in skeletal muscle, kidney and ovary and not in placenta and peripheral blood leukocytes.

It localises to the nucleus. Its function is as follows. Transcriptional activator that binds to DNA sequences containing the consensus pentanucleotide 5'-CGGA[AT]-3'. Required for olfactory dopaminergic neuron differentiation; may directly activate expression of tyrosine hydroxylase (TH). The sequence is that of ETS translocation variant 1 from Homo sapiens (Human).